Reading from the N-terminus, the 441-residue chain is UBX domain-containing protein 6 (441 aa).

The tract at residues 1–10 (MKKFFQEIKA) is mediates interaction with LMAN1. Disordered regions lie at residues 12 to 57 (IKFK…MAAA), 62 to 81 (RLEQKQPRARGPTSQDSIRN), and 86 to 113 (ELRAEAAVSGDPEAPGSNTAPEPKEEGS). Residues 27 to 36 (VGEKAPKEKP) show a composition bias toward basic and acidic residues. The tract at residues 51 to 63 (EAQMAAAAALARL) is VCP/p97-interacting motif (VIM). A PUB domain is found at 175 to 244 (VDTIAKYLDN…GPEEFYVLSE (70 aa)). The UBX domain occupies 332 to 408 (RKYTYTLLRV…GLVPSALLTF (77 aa)).

As to quaternary structure, interacts with VCP through the PUB domain (via C-terminus) and VIM motif (via N-terminus); the interaction is direct. Forms a ternary complex with CAV1 and VCP. Interacts with SYVN1. Interacts with HERPUD1. Interacts with VCPKMT. May interact with DERL1. Interacts with PLAA, VCP and YOD1; may form a complex involved in macroautophagy. Interacts with LMAN1.

It is found in the cytoplasm. It localises to the cytosol. The protein localises to the membrane. Its subcellular location is the nucleus. The protein resides in the cytoskeleton. It is found in the microtubule organizing center. It localises to the centrosome. The protein localises to the early endosome membrane. Its subcellular location is the late endosome membrane. The protein resides in the lysosome membrane. Functionally, may negatively regulate the ATPase activity of VCP, an ATP-driven segregase that associates with different cofactors to control a wide variety of cellular processes. As a cofactor of VCP, it may play a role in the transport of CAV1 to lysosomes for degradation. It may also play a role in endoplasmic reticulum-associated degradation (ERAD) of misfolded proteins. Together with VCP and other cofactors, it may play a role in macroautophagy, regulating for instance the clearance of damaged lysosomes. This is UBX domain-containing protein 6 from Bos taurus (Bovine).